We begin with the raw amino-acid sequence, 608 residues long: Granule-bound starch synthase 1, chloroplastic/amyloplastic (608 aa).

The transit peptide at 1–76 (MATITASHFV…EGGMAAGTIV (76 aa)) directs the protein to the chloroplast. Residue K96 coordinates ADP-alpha-D-glucose.

This sequence belongs to the glycosyltransferase 1 family. Bacterial/plant glycogen synthase subfamily.

The protein localises to the plastid. It is found in the chloroplast. It localises to the amyloplast. It carries out the reaction an NDP-alpha-D-glucose + [(1-&gt;4)-alpha-D-glucosyl](n) = [(1-&gt;4)-alpha-D-glucosyl](n+1) + a ribonucleoside 5'-diphosphate + H(+). It participates in glycan biosynthesis; starch biosynthesis. In terms of biological role, required for the synthesis of amylose. This chain is Granule-bound starch synthase 1, chloroplastic/amyloplastic (WAXY), found in Ipomoea batatas (Sweet potato).